A 293-amino-acid polypeptide reads, in one-letter code: Kallikrein-5 (293 aa).

Positions 1–22 are cleaved as a signal peptide; the sequence is MATARPPWMWVLCALITALLLG. Residues 37–49 show a composition bias toward polar residues; sequence HPSNTVPSGSNQD. The tract at residues 37-68 is disordered; that stretch reads HPSNTVPSGSNQDLGAGAGEDARSDDSSSRII. One can recognise a Peptidase S1 domain in the interval 67–290; it reads IINGSDCDMH…FTKWIQETIQ (224 aa). A glycan (N-linked (GlcNAc...) asparagine) is linked at Asn69. Disulfide bonds link Cys73–Cys206, Cys93–Cys109, Cys178–Cys279, Cys185–Cys251, Cys217–Cys231, and Cys241–Cys266. Active-site charge relay system residues include His108 and Asp153. N-linked (GlcNAc...) asparagine glycans are attached at residues Asn173 and Asn208. Catalysis depends on Ser245, which acts as the Charge relay system. A glycan (N-linked (GlcNAc...) asparagine) is linked at Asn252.

This sequence belongs to the peptidase S1 family. Kallikrein subfamily. As to quaternary structure, interacts with SPINK9. In terms of tissue distribution, expressed in skin, breast, brain and testis. Expressed at the stratum granulosum of palmar skin.

The protein localises to the secreted. Inhibited by Zn2+. In terms of biological role, may be involved in desquamation. The protein is Kallikrein-5 of Homo sapiens (Human).